Reading from the N-terminus, the 205-residue chain is Outer-membrane lipoprotein LolB (205 aa).

The signal sequence occupies residues 1-17; the sequence is MRLRLFLAASALALLSG. Residue C18 is the site of N-palmitoyl cysteine attachment. C18 carries S-diacylglycerol cysteine lipidation.

It belongs to the LolB family. In terms of assembly, monomer.

It localises to the cell outer membrane. Functionally, plays a critical role in the incorporation of lipoproteins in the outer membrane after they are released by the LolA protein. This is Outer-membrane lipoprotein LolB from Pseudomonas aeruginosa (strain LESB58).